Consider the following 539-residue polypeptide: Probable 1,4-beta-D-glucan cellobiohydrolase B (539 aa).

The N-terminal stretch at methionine 1–alanine 26 is a signal peptide. The catalytic stretch occupies residues glutamine 27–serine 461. Residue asparagine 90 is glycosylated (N-linked (GlcNAc...) asparagine). Glutamate 238 (nucleophile) is an active-site residue. Glutamate 243 functions as the Proton donor in the catalytic mechanism. 2 N-linked (GlcNAc...) asparagine glycosylation sites follow: asparagine 296 and asparagine 495. Residues threonine 462–glycine 503 are thr-rich linker. Over residues threonine 462–glycine 503 the composition is skewed to low complexity. A disordered region spans residues threonine 462–valine 504. The CBM1 domain maps to glycine 503–leucine 539. Disulfide bonds link cysteine 511–cysteine 528 and cysteine 522–cysteine 538.

Belongs to the glycosyl hydrolase 7 (cellulase C) family.

The protein localises to the secreted. It catalyses the reaction Hydrolysis of (1-&gt;4)-beta-D-glucosidic linkages in cellulose and cellotetraose, releasing cellobiose from the non-reducing ends of the chains.. Its function is as follows. The biological conversion of cellulose to glucose generally requires three types of hydrolytic enzymes: (1) Endoglucanases which cut internal beta-1,4-glucosidic bonds; (2) Exocellobiohydrolases that cut the disaccharide cellobiose from the non-reducing end of the cellulose polymer chain; (3) Beta-1,4-glucosidases which hydrolyze the cellobiose and other short cello-oligosaccharides to glucose. This chain is Probable 1,4-beta-D-glucan cellobiohydrolase B (cbhB), found in Aspergillus clavatus (strain ATCC 1007 / CBS 513.65 / DSM 816 / NCTC 3887 / NRRL 1 / QM 1276 / 107).